The sequence spans 409 residues: Multifunctional CCA protein (409 aa).

ATP-binding residues include G8 and R11. 2 residues coordinate CTP: G8 and R11. Positions 21 and 23 each coordinate Mg(2+). ATP contacts are provided by R91, R137, and R140. CTP contacts are provided by R91, R137, and R140. An HD domain is found at 228-329 (SGLHTLSVLE…LELLQSFDVY (102 aa)).

The protein belongs to the tRNA nucleotidyltransferase/poly(A) polymerase family. Bacterial CCA-adding enzyme type 1 subfamily. Monomer. Can also form homodimers and oligomers. It depends on Mg(2+) as a cofactor. Ni(2+) is required as a cofactor.

The catalysed reaction is a tRNA precursor + 2 CTP + ATP = a tRNA with a 3' CCA end + 3 diphosphate. The enzyme catalyses a tRNA with a 3' CCA end + 2 CTP + ATP = a tRNA with a 3' CCACCA end + 3 diphosphate. Its function is as follows. Catalyzes the addition and repair of the essential 3'-terminal CCA sequence in tRNAs without using a nucleic acid template. Adds these three nucleotides in the order of C, C, and A to the tRNA nucleotide-73, using CTP and ATP as substrates and producing inorganic pyrophosphate. tRNA 3'-terminal CCA addition is required both for tRNA processing and repair. Also involved in tRNA surveillance by mediating tandem CCA addition to generate a CCACCA at the 3' terminus of unstable tRNAs. While stable tRNAs receive only 3'-terminal CCA, unstable tRNAs are marked with CCACCA and rapidly degraded. The polypeptide is Multifunctional CCA protein (Pseudomonas fluorescens (strain Pf0-1)).